An 822-amino-acid polypeptide reads, in one-letter code: Myosin-D (822 aa).

In terms of domain architecture, Myosin motor spans leucine 95 to arginine 770. Residue glycine 189–threonine 196 participates in ATP binding. Residues serine 660–aspartate 670 form an actin-binding region. Residues alanine 772 to cysteine 822 are tail.

It belongs to the TRAFAC class myosin-kinesin ATPase superfamily. Myosin family.

Its subcellular location is the cell membrane. The protein localises to the cytoplasm. Functionally, myosins are actin-based motor molecules with ATPase activity. Unconventional myosins serve in intracellular movements. Their highly divergent tails are presumed to bind to membranous compartments, which would be moved relative to actin filaments. In Toxoplasma gondii, this protein is Myosin-D.